We begin with the raw amino-acid sequence, 311 residues long: Nuclear hormone receptor family member nhr-111 (311 aa).

The nuclear receptor DNA-binding region spans 39-115 (ITLCAVCGDT…KGMNKNAVQP (77 aa)). NR C4-type zinc fingers lie at residues 42 to 62 (CAVC…CFGC) and 78 to 98 (CWNG…CKSC). The NR LBD domain occupies 116–311 (ERTSHSYTVE…KACEIVISFL (196 aa)).

The protein belongs to the nuclear hormone receptor family.

The protein localises to the nucleus. Functionally, orphan nuclear receptor. In Caenorhabditis elegans, this protein is Nuclear hormone receptor family member nhr-111 (nhr-111).